We begin with the raw amino-acid sequence, 410 residues long: LL-diaminopimelate aminotransferase (410 aa).

Positions 15 and 42 each coordinate substrate. Residues Tyr-72, 108–109 (TK), Tyr-132, Asn-186, Tyr-217, and 245–247 (SFS) contribute to the pyridoxal 5'-phosphate site. Residues Lys-109, Tyr-132, and Asn-186 each contribute to the substrate site. N6-(pyridoxal phosphate)lysine is present on Lys-248. Positions 256 and 291 each coordinate pyridoxal 5'-phosphate. Substrate contacts are provided by Asn-291 and Arg-387.

This sequence belongs to the class-I pyridoxal-phosphate-dependent aminotransferase family. LL-diaminopimelate aminotransferase subfamily. In terms of assembly, homodimer. It depends on pyridoxal 5'-phosphate as a cofactor.

The enzyme catalyses (2S,6S)-2,6-diaminopimelate + 2-oxoglutarate = (S)-2,3,4,5-tetrahydrodipicolinate + L-glutamate + H2O + H(+). Its pathway is amino-acid biosynthesis; L-lysine biosynthesis via DAP pathway; LL-2,6-diaminopimelate from (S)-tetrahydrodipicolinate (aminotransferase route): step 1/1. Involved in the synthesis of meso-diaminopimelate (m-DAP or DL-DAP), required for both lysine and peptidoglycan biosynthesis. Catalyzes the direct conversion of tetrahydrodipicolinate to LL-diaminopimelate. The polypeptide is LL-diaminopimelate aminotransferase (Lawsonia intracellularis (strain PHE/MN1-00)).